The chain runs to 273 residues: Large ribosomal subunit protein uL2c (273 aa).

Residues 223 to 273 (MNPVDHPHGGGEGRAPIGRKKPTTPWGYPALGRRSRKRNKYSDSFILRRRK) form a disordered region.

This sequence belongs to the universal ribosomal protein uL2 family. In terms of assembly, part of the 50S ribosomal subunit.

Its subcellular location is the plastid. It localises to the chloroplast. In Calycanthus floridus var. glaucus (Eastern sweetshrub), this protein is Large ribosomal subunit protein uL2c (rpl2).